A 151-amino-acid polypeptide reads, in one-letter code: Multiprotein-bridging factor 1 (151 aa).

The disordered stretch occupies residues 1-32 (MSSDWDSVTIIGQKARVGGGGPRENVAKTSSQ). In terms of domain architecture, HTH cro/C1-type spans 86–140 (IQQARQEKKLTQKELATKVNEKPNVINDYEAGRAIPNQQLLAKLERALGVKLRGK). A DNA-binding region (H-T-H motif) is located at residues 97 to 116 (QKELATKVNEKPNVINDYEA).

This sequence belongs to the MBF1 family.

Its function is as follows. Transcriptional coactivator that stimulates GCN4-dependent transcriptional activity by bridging the DNA-binding region of GCN4 and TBP (SPT15), thereby recruiting TBP to GCN4-bound promoters. Involved in induction of the ribosome quality control (RQC) pathway; a pathway that degrades nascent peptide chains during problematic translation. Required to prevent stalled ribosomes from frameshifting. The chain is Multiprotein-bridging factor 1 (MBF1) from Candida albicans (strain SC5314 / ATCC MYA-2876) (Yeast).